A 477-amino-acid polypeptide reads, in one-letter code: UDP-N-acetylmuramate--L-alanine ligase (477 aa).

Residue 122-128 (GTHGKTT) participates in ATP binding.

The protein belongs to the MurCDEF family.

The protein localises to the cytoplasm. It catalyses the reaction UDP-N-acetyl-alpha-D-muramate + L-alanine + ATP = UDP-N-acetyl-alpha-D-muramoyl-L-alanine + ADP + phosphate + H(+). It functions in the pathway cell wall biogenesis; peptidoglycan biosynthesis. Functionally, cell wall formation. The sequence is that of UDP-N-acetylmuramate--L-alanine ligase from Xylella fastidiosa (strain M12).